A 319-amino-acid chain; its full sequence is Tyrosine phosphatase-like protein N3 (319 aa).

A Tyrosine-protein phosphatase domain is found at 7 to 285 (SNLSIHEFWR…LIINKILLHS (279 aa)).

It belongs to the protein-tyrosine phosphatase family.

In Microplitis demolitor bracovirus (isolate Webb) (MdBV), this protein is Tyrosine phosphatase-like protein N3 (N7).